A 1148-amino-acid polypeptide reads, in one-letter code: Small G protein signaling modulator 1 (1148 aa).

The RUN domain occupies 36 to 190 (HEDSSHIISF…EYTKMKTADH (155 aa)). Residues 256-297 (LLYGKNNVLVQPRDDMEAVPGYLSLHQTADVMTLKWTPNQLM) form an important for interaction with RAB9A and RAB9B region. The tract at residues 301–350 (VGDLDYEKSVYWDYAMTIRLEEIVYLHCHQQVDSGGTVVLVSQDGIQRPP) is required for interaction with RAP family members. Disordered stretches follow at residues 377-411 (DPPLWSQRGKGKVFPKLRKRSPQGSAESTSSDKDD), 700-830 (DSTI…PREE), and 871-894 (GWRSSETEKHGQADSEDNLSEEPE). The span at 385–397 (GKGKVFPKLRKRS) shows a compositional bias: basic residues. The 465-residue stretch at 617–1081 (GIQPEIRKAV…LVWETIWAAK (465 aa)) folds into the Rab-GAP TBC domain. Over residues 702 to 716 (TISNESSQSCSSGRQ) the composition is skewed to polar residues. Over residues 742–751 (AEGRLEEKQP) the composition is skewed to basic and acidic residues. The span at 757–802 (NLVNGTCSPDSGHPSSHNFSSGLSEHSEPSLSTEDSVLDAQRNTPT) shows a compositional bias: polar residues. Composition is skewed to basic and acidic residues over residues 805-816 (RPRDGSVDDRQS) and 871-883 (GWRSSETEKHGQA). Over residues 884–894 (DSEDNLSEEPE) the composition is skewed to acidic residues.

It belongs to the RUTBC family. As to quaternary structure, interacts with RAB9A (GTP-bound form) and RAB9B (GTP-bound form); has much lower affinity for GDP-bound RAB9A and RAB9B. Interacts with RAB3A, RAB4A, RAB5A, RAB8A, RAB11A, RAP1A, RAP1B, RAP2A and RAP2B. No interaction with RAB27A. Mainly expressed in brain, heart and testis.

It is found in the golgi apparatus. The protein localises to the trans-Golgi network. It localises to the cytoplasmic vesicle membrane. Its subcellular location is the cytoplasm. In terms of biological role, interacts with numerous Rab family members, functioning as Rab effector for some, and as GTPase activator for others. Promotes GTP hydrolysis by RAB34 and RAB36. Probably functions as a GTPase effector with RAB9A and RAB9B; does not stimulate GTP hydrolysis with RAB9A and RAB9B. The polypeptide is Small G protein signaling modulator 1 (SGSM1) (Homo sapiens (Human)).